A 234-amino-acid chain; its full sequence is Urease accessory protein UreF (234 aa).

Belongs to the UreF family. UreD, UreF and UreG form a complex that acts as a GTP-hydrolysis-dependent molecular chaperone, activating the urease apoprotein by helping to assemble the nickel containing metallocenter of UreC. The UreE protein probably delivers the nickel.

It is found in the cytoplasm. Required for maturation of urease via the functional incorporation of the urease nickel metallocenter. In Kocuria rhizophila (strain ATCC 9341 / DSM 348 / NBRC 103217 / DC2201), this protein is Urease accessory protein UreF.